Consider the following 331-residue polypeptide: Ketol-acid reductoisomerase (NADP(+)) (331 aa).

A KARI N-terminal Rossmann domain is found at 2–182; the sequence is ARMYYDEDGN…GGTRAGILET (181 aa). Residues 25–28, S51, S53, and 83–86 contribute to the NADP(+) site; these read YGSQ and DEVQ. The active site involves H108. Residue G134 coordinates NADP(+). The 146-residue stretch at 183–328 folds into the KARI C-terminal knotted domain; it reads SFREETETDL…KDLRAMFSWL (146 aa). The Mg(2+) site is built by D191, E195, E227, and E231. Residue S252 coordinates substrate.

This sequence belongs to the ketol-acid reductoisomerase family. Requires Mg(2+) as cofactor.

The catalysed reaction is (2R)-2,3-dihydroxy-3-methylbutanoate + NADP(+) = (2S)-2-acetolactate + NADPH + H(+). It catalyses the reaction (2R,3R)-2,3-dihydroxy-3-methylpentanoate + NADP(+) = (S)-2-ethyl-2-hydroxy-3-oxobutanoate + NADPH + H(+). It functions in the pathway amino-acid biosynthesis; L-isoleucine biosynthesis; L-isoleucine from 2-oxobutanoate: step 2/4. It participates in amino-acid biosynthesis; L-valine biosynthesis; L-valine from pyruvate: step 2/4. In terms of biological role, involved in the biosynthesis of branched-chain amino acids (BCAA). Catalyzes an alkyl-migration followed by a ketol-acid reduction of (S)-2-acetolactate (S2AL) to yield (R)-2,3-dihydroxy-isovalerate. In the isomerase reaction, S2AL is rearranged via a Mg-dependent methyl migration to produce 3-hydroxy-3-methyl-2-ketobutyrate (HMKB). In the reductase reaction, this 2-ketoacid undergoes a metal-dependent reduction by NADPH to yield (R)-2,3-dihydroxy-isovalerate. This Gloeothece citriformis (strain PCC 7424) (Cyanothece sp. (strain PCC 7424)) protein is Ketol-acid reductoisomerase (NADP(+)).